We begin with the raw amino-acid sequence, 223 residues long: MAYSRLAPHCGLPVYGHHIGNSEMSGGFSWSSLGSSLSSGLSRIGSFLGSTAQRIGNSQGFQQAKEGFLKSGVLENVGSLAGQTVSSLADIGRLKLESDLQKLRERALGAQQQQLPPLTQEQLAQLLASTQTELPSSAPAVPMPIPAPVPPLVTGVRPGQMRPEVLPPDRGVALGPLIEEPAPRPIAVPGSRPRKRKRVRGWGSALEDMLGDGVCYRSKRYCY.

Positions 1-27 (MAYSRLAPHCGLPVYGHHIGNSEMSGG) are excised as a propeptide. Positions 28-51 (FSWSSLGSSLSSGLSRIGSFLGST) are amphipathic alpha-helix essential for membrane lytic activity. Residues 29–50 (SWSSLGSSLSSGLSRIGSFLGS) are involved in endosomal membrane lysis. Interaction with hexon protein stretches follow at residues 45 to 71 (GSFL…FLKS) and 206 to 212 (LEDMLGD). Short sequence motifs (nuclear export signal) lie at residues 64-73 (AKEGFLKSGV) and 204-215 (SALEDMLGDGVC). Residues 213 to 223 (GVCYRSKRYCY) form a binds to importin alpha/beta, involved in hexon nuclear import region.

The protein belongs to the adenoviridae protein VI family. As to quaternary structure, interacts with hexon protein; this interaction allows nuclear import of hexon trimers and possibly pre-capsid assembly. Interacts (via C-terminal NLS) with importin alpha/beta. In terms of assembly, interacts (via PPxY motif) with host NEDD4 ubiquitine ligase; this interaction might play a role in virus intracellular transport during entry. Part of a complex composed of the core-capsid bridging protein, the endosome lysis protein VI and the hexon-linking protein VIII; these interactions bridge the virus core to the capsid. Interacts with peripentonal hexons; this interaction stabilizes the capsid by gluing two peripentonal hexons together and joining them with an adjacent group-of-nine hexon. Heterodimer with the viral protease; disulfide-linked. Interacts with the viral protease. Ubiquitinated by Nedd4 following partial capsid disassembly; which might play a role in intracellular virus movement during entry. Post-translationally, contains the major nuclear import and export signals. Proteolytically removed during virion maturation. The processing of the C-terminus turns the precursor into a mature viral structural protein and abrogates its ability to promote hexon import and act as a potential chaperone protein.

It is found in the host nucleus. It localises to the host cytoplasm. Its subcellular location is the virion. During virus assembly, promotes hexon trimers nuclear import through nuclear pore complexes via an importin alpha/beta-dependent mechanism. By analogy to herpesviruses capsid assembly, might act as a chaperone to promote the formation of the icosahedral capsid. Its function is as follows. Structural component of the virion that provides increased stability to the particle shell through its interaction with the core-capsid bridging protein and the hexon-linking protein VIII. Fibers shedding during virus entry into host cell allows the endosome lysis protein to be exposed as a membrane-lytic peptide. Exhibits pH-independent membrane fragmentation activity and probably mediates viral rapid escape from host endosome via organellar membrane lysis. It is not clear if it then remains partially associated with the capsid and involved in the intracellular microtubule-dependent transport of capsid to the nucleus, or if it is lost during endosomal penetration. Functionally, cofactor that activates the viral protease. Binds to viral protease in a 1:1 ratio. This chain is Pre-protein VI, found in Pantherophis guttatus (Corn snake).